The following is a 243-amino-acid chain: Adenosylcobinamide-GDP ribazoletransferase (243 aa).

The next 5 helical transmembrane spans lie at 31–51 (LLFYPLVGVVFGTLLLGFNAL), 55–75 (APLLLHAALLLSAWVLLSGGL), 109–129 (IAVVTLVVVLLLKFAAIVALI), 135–155 (IGLLLAPLIGRSAMLALFLGT), and 188–208 (VVLAGWSGIAALLVCAVCFYW).

The protein belongs to the CobS family. Mg(2+) serves as cofactor.

Its subcellular location is the cell inner membrane. It catalyses the reaction alpha-ribazole + adenosylcob(III)inamide-GDP = adenosylcob(III)alamin + GMP + H(+). It carries out the reaction alpha-ribazole 5'-phosphate + adenosylcob(III)inamide-GDP = adenosylcob(III)alamin 5'-phosphate + GMP + H(+). It participates in cofactor biosynthesis; adenosylcobalamin biosynthesis; adenosylcobalamin from cob(II)yrinate a,c-diamide: step 7/7. Joins adenosylcobinamide-GDP and alpha-ribazole to generate adenosylcobalamin (Ado-cobalamin). Also synthesizes adenosylcobalamin 5'-phosphate from adenosylcobinamide-GDP and alpha-ribazole 5'-phosphate. The chain is Adenosylcobinamide-GDP ribazoletransferase from Pseudomonas syringae pv. tomato (strain ATCC BAA-871 / DC3000).